Consider the following 78-residue polypeptide: Kassorin-S (78 aa).

The N-terminal stretch at 1–22 (MLTLKKSMLLLFFLGMVSLSLA) is a signal peptide. Positions 23-64 (NSKRADEEGEDKRADEEGEDKRADEEGEDKRADEEGEEKRKR) are excised as a propeptide. The segment at 24-60 (SKRADEEGEDKRADEEGEDKRADEEGEDKRADEEGEE) is disordered. Positions 25-60 (KRADEEGEDKRADEEGEDKRADEEGEDKRADEEGEE) are enriched in basic and acidic residues. Leu77 carries the leucine amide modification.

It belongs to the frog skin active peptide (FSAP) family. Brevinin subfamily. Expressed by the skin glands.

Its subcellular location is the secreted. Its function is as follows. Antimicrobial peptide. Active against the Gram-positive bacterium S.aureus (MIC=30 uM) and the yeast C.albicans (MIC=100 uM). Not effective against the Gram-negative bacterium E.coli at concentrations up to 250 uM. Lacks ability to induce contraction of smooth muscle in isolated guinea pig urinary bladder. Elicits histamine release from rat peritoneal mast cells. This Kassina senegalensis (Senegal running frog) protein is Kassorin-S.